We begin with the raw amino-acid sequence, 201 residues long: UPF0323 lipoprotein Cj0371 (201 aa).

The first 26 residues, 1-26 (MKKIKKIIQIGMIGGLAAVAGGALAG), serve as a signal peptide directing secretion. A lipid anchor (N-palmitoyl cysteine) is attached at Cys27. Cys27 carries S-diacylglycerol cysteine lipidation. Residues 169-201 (NKAGTTSSASSAKKSGFFGGGSKATSSSSSFGS) form a disordered region. Composition is skewed to low complexity over residues 170–184 (KAGT…KKSG) and 191–201 (KATSSSSSFGS).

Belongs to the UPF0323 family.

It is found in the cell membrane. This Campylobacter jejuni subsp. jejuni serotype O:2 (strain ATCC 700819 / NCTC 11168) protein is UPF0323 lipoprotein Cj0371.